The primary structure comprises 498 residues: Glycerol kinase (498 aa).

Threonine 12 lines the ADP pocket. Threonine 12, threonine 13, and serine 14 together coordinate ATP. Threonine 12 serves as a coordination point for sn-glycerol 3-phosphate. Arginine 16 provides a ligand contact to ADP. Residues arginine 82, glutamate 83, tyrosine 135, and aspartate 245 each contribute to the sn-glycerol 3-phosphate site. Positions 82, 83, 135, 245, and 246 each coordinate glycerol. Positions 267 and 310 each coordinate ADP. The ATP site is built by threonine 267, glycine 310, glutamine 314, and glycine 411. The ADP site is built by glycine 411 and asparagine 415.

The protein belongs to the FGGY kinase family. As to quaternary structure, homotetramer and homodimer (in equilibrium).

The enzyme catalyses glycerol + ATP = sn-glycerol 3-phosphate + ADP + H(+). It participates in polyol metabolism; glycerol degradation via glycerol kinase pathway; sn-glycerol 3-phosphate from glycerol: step 1/1. With respect to regulation, activated by phosphorylation and inhibited by fructose 1,6-bisphosphate (FBP). In terms of biological role, key enzyme in the regulation of glycerol uptake and metabolism. Catalyzes the phosphorylation of glycerol to yield sn-glycerol 3-phosphate. In Clostridium botulinum (strain Alaska E43 / Type E3), this protein is Glycerol kinase.